Reading from the N-terminus, the 59-residue chain is Anti-inflammatory peptide amregulin (59 aa).

The first 19 residues, Met1–Gly19, serve as a signal peptide directing secretion.

As to expression, salivary glands.

The protein resides in the secreted. Anti-inflammatory peptide that may facilitate successful blood feeding of ticks and may lead to immunotolerance in its host. Inhibits the secretion of inflammatory factors in rat splenocytes, such as tumor necrosis factor-alpha (TNF), interleukin-1, interleukin-8 (CXCL8) and interferon-gamma (IFNG). In addition, shows strong free radical scavenging and antioxidant activities in vitro. In vivo, inhibits adjuvant-induced paw inflammation in mouse models. This Amblyomma variegatum (Tropical bont tick) protein is Anti-inflammatory peptide amregulin.